Here is a 268-residue protein sequence, read N- to C-terminus: Small ribosomal subunit protein eS1 (268 aa).

Residues 1–21 (MAVGKNKGLSKGGKKGGKKKV) are disordered.

Belongs to the eukaryotic ribosomal protein eS1 family. Component of the small ribosomal subunit. Mature ribosomes consist of a small (40S) and a large (60S) subunit. The 40S subunit contains about 33 different proteins and 1 molecule of RNA (18S). The 60S subunit contains about 49 different proteins and 3 molecules of RNA (28S, 5.8S and 5S).

The protein resides in the cytoplasm. Essential for oogenesis; required for late follicle cell development. The chain is Small ribosomal subunit protein eS1 from Drosophila willistoni (Fruit fly).